The primary structure comprises 331 residues: Ribosomal RNA small subunit methyltransferase H (331 aa).

S-adenosyl-L-methionine is bound by residues 38 to 40 (GGY), D56, F83, D100, and Q107. The disordered stretch occupies residues 287-331 (DEAELAENPRARSARLRVGVRTDAPAGKVDPQALGTPLIPKKGRR).

Belongs to the methyltransferase superfamily. RsmH family.

It localises to the cytoplasm. The catalysed reaction is cytidine(1402) in 16S rRNA + S-adenosyl-L-methionine = N(4)-methylcytidine(1402) in 16S rRNA + S-adenosyl-L-homocysteine + H(+). Functionally, specifically methylates the N4 position of cytidine in position 1402 (C1402) of 16S rRNA. This is Ribosomal RNA small subunit methyltransferase H from Cereibacter sphaeroides (strain ATCC 17023 / DSM 158 / JCM 6121 / CCUG 31486 / LMG 2827 / NBRC 12203 / NCIMB 8253 / ATH 2.4.1.) (Rhodobacter sphaeroides).